A 564-amino-acid polypeptide reads, in one-letter code: Septation ring formation regulator EzrA (564 aa).

Over 1–2 (MV) the chain is Extracellular. Residues 3–21 (FVISVILAIIVILTIGLIL) traverse the membrane as a helical segment. Over 22–564 (RKRIYDKVDH…IEENQLTLNR (543 aa)) the chain is Cytoplasmic. Coiled-coil stretches lie at residues 101 to 140 (ANNILTEGDQKLQNIEVKIEEILEELDELLSSEKTSREEV), 168 to 215 (FDKK…MEQF), 251 to 436 (GFDK…KKSN), and 468 to 537 (DIAK…ELSL).

It belongs to the EzrA family.

It localises to the cell membrane. In terms of biological role, negative regulator of FtsZ ring formation; modulates the frequency and position of FtsZ ring formation. Inhibits FtsZ ring formation at polar sites. Interacts either with FtsZ or with one of its binding partners to promote depolymerization. The polypeptide is Septation ring formation regulator EzrA (Oceanobacillus iheyensis (strain DSM 14371 / CIP 107618 / JCM 11309 / KCTC 3954 / HTE831)).